The chain runs to 539 residues: CTP synthase (539 aa).

An amidoligase domain region spans residues Met-1–Leu-269. CTP is bound at residue Ser-15. Ser-15 lines the UTP pocket. Residue Ser-16–Ile-21 coordinates ATP. Tyr-56 contacts L-glutamine. Asp-73 provides a ligand contact to ATP. Positions 73 and 143 each coordinate Mg(2+). CTP is bound by residues Asp-150–Glu-152, Lys-190–Gln-195, and Lys-226. Residues Lys-190–Gln-195 and Lys-226 contribute to the UTP site. Residues Asn-295–Gly-537 enclose the Glutamine amidotransferase type-1 domain. Gly-357 is an L-glutamine binding site. The active-site Nucleophile; for glutamine hydrolysis is Cys-384. Residues Leu-385–Gln-388, Glu-408, and Arg-465 contribute to the L-glutamine site. Active-site residues include His-510 and Glu-512.

This sequence belongs to the CTP synthase family. As to quaternary structure, homotetramer.

It catalyses the reaction UTP + L-glutamine + ATP + H2O = CTP + L-glutamate + ADP + phosphate + 2 H(+). The catalysed reaction is L-glutamine + H2O = L-glutamate + NH4(+). It carries out the reaction UTP + NH4(+) + ATP = CTP + ADP + phosphate + 2 H(+). The protein operates within pyrimidine metabolism; CTP biosynthesis via de novo pathway; CTP from UDP: step 2/2. Allosterically activated by GTP, when glutamine is the substrate; GTP has no effect on the reaction when ammonia is the substrate. The allosteric effector GTP functions by stabilizing the protein conformation that binds the tetrahedral intermediate(s) formed during glutamine hydrolysis. Inhibited by the product CTP, via allosteric rather than competitive inhibition. In terms of biological role, catalyzes the ATP-dependent amination of UTP to CTP with either L-glutamine or ammonia as the source of nitrogen. Regulates intracellular CTP levels through interactions with the four ribonucleotide triphosphates. The sequence is that of CTP synthase from Cytophaga hutchinsonii (strain ATCC 33406 / DSM 1761 / CIP 103989 / NBRC 15051 / NCIMB 9469 / D465).